The following is a 267-amino-acid chain: Tryptophan synthase alpha chain (267 aa).

Residues Glu-49 and Asp-60 each act as proton acceptor in the active site.

This sequence belongs to the TrpA family. In terms of assembly, tetramer of two alpha and two beta chains.

It carries out the reaction (1S,2R)-1-C-(indol-3-yl)glycerol 3-phosphate + L-serine = D-glyceraldehyde 3-phosphate + L-tryptophan + H2O. It participates in amino-acid biosynthesis; L-tryptophan biosynthesis; L-tryptophan from chorismate: step 5/5. In terms of biological role, the alpha subunit is responsible for the aldol cleavage of indoleglycerol phosphate to indole and glyceraldehyde 3-phosphate. This chain is Tryptophan synthase alpha chain, found in Cyanothece sp. (strain PCC 7425 / ATCC 29141).